A 100-amino-acid polypeptide reads, in one-letter code: Small ribosomal subunit protein uS14 (100 aa).

This sequence belongs to the universal ribosomal protein uS14 family. In terms of assembly, part of the 30S ribosomal subunit. Contacts proteins S3 and S10.

Binds 16S rRNA, required for the assembly of 30S particles and may also be responsible for determining the conformation of the 16S rRNA at the A site. In Microcystis aeruginosa (strain NIES-843 / IAM M-2473), this protein is Small ribosomal subunit protein uS14.